We begin with the raw amino-acid sequence, 258 residues long: MTQHSRDTPQFYLTAPSPCPYLPGRHERKVFTHLVGNKAGELNDLLTHGGFRRSQSIAYRPACDQCRACVSVRVIANEFKPSRNQRKLLARNADIVGEQRNPVPTSEQYSVFRAYLDQRHRHGGMADMTVLDYAMMVEDSHVQTRMIEYRKRTPDTGITGRGGELIAAALTDVLGDGLSMVYSFYEPNEQHRSLGTFMILDHIARARRLGLPYVYLGYWIEGSKKMDYKGRYLPQQRLAPSGWLRIDASGEMQPEPQD.

This sequence belongs to the R-transferase family. Bpt subfamily.

It localises to the cytoplasm. The enzyme catalyses N-terminal L-glutamyl-[protein] + L-leucyl-tRNA(Leu) = N-terminal L-leucyl-L-glutamyl-[protein] + tRNA(Leu) + H(+). It catalyses the reaction N-terminal L-aspartyl-[protein] + L-leucyl-tRNA(Leu) = N-terminal L-leucyl-L-aspartyl-[protein] + tRNA(Leu) + H(+). Functions in the N-end rule pathway of protein degradation where it conjugates Leu from its aminoacyl-tRNA to the N-termini of proteins containing an N-terminal aspartate or glutamate. The protein is Aspartate/glutamate leucyltransferase of Rhodopseudomonas palustris (strain TIE-1).